Here is a 495-residue protein sequence, read N- to C-terminus: ATP synthase subunit beta, chloroplastic (495 aa).

172–179 (GGAGVGKT) contacts ATP.

This sequence belongs to the ATPase alpha/beta chains family. F-type ATPases have 2 components, CF(1) - the catalytic core - and CF(0) - the membrane proton channel. CF(1) has five subunits: alpha(3), beta(3), gamma(1), delta(1), epsilon(1). CF(0) has four main subunits: a(1), b(1), b'(1) and c(9-12).

Its subcellular location is the plastid. It localises to the chloroplast thylakoid membrane. It carries out the reaction ATP + H2O + 4 H(+)(in) = ADP + phosphate + 5 H(+)(out). In terms of biological role, produces ATP from ADP in the presence of a proton gradient across the membrane. The catalytic sites are hosted primarily by the beta subunits. This chain is ATP synthase subunit beta, chloroplastic, found in Pteridium aquilinum (Bracken fern).